The primary structure comprises 447 residues: Histidine--tRNA ligase (447 aa).

Belongs to the class-II aminoacyl-tRNA synthetase family. In terms of assembly, homodimer.

Its subcellular location is the cytoplasm. It catalyses the reaction tRNA(His) + L-histidine + ATP = L-histidyl-tRNA(His) + AMP + diphosphate + H(+). This chain is Histidine--tRNA ligase (hisS), found in Synechocystis sp. (strain ATCC 27184 / PCC 6803 / Kazusa).